Reading from the N-terminus, the 66-residue chain is Surface composition regulator (66 aa).

Belongs to the GlgS family.

Its function is as follows. Major determinant of cell surface composition. Negatively regulates motility, adhesion and synthesis of biofilm exopolysaccharides. This Escherichia coli O139:H28 (strain E24377A / ETEC) protein is Surface composition regulator.